The primary structure comprises 66 residues: Large ribosomal subunit protein bL35 (66 aa).

The span at 1 to 16 (MPKQKTHRASAKRFKR) shows a compositional bias: basic residues. Residues 1–20 (MPKQKTHRASAKRFKRTGNG) are disordered.

Belongs to the bacterial ribosomal protein bL35 family.

The polypeptide is Large ribosomal subunit protein bL35 (Lactococcus lactis subsp. lactis (strain IL1403) (Streptococcus lactis)).